Reading from the N-terminus, the 190-residue chain is ATP synthase subunit b (190 aa).

The chain crosses the membrane as a helical span at residues 24-44; that stretch reads IVGSLICFVVILFFFWKLVLP.

It belongs to the ATPase B chain family. In terms of assembly, F-type ATPases have 2 components, F(1) - the catalytic core - and F(0) - the membrane proton channel. F(1) has five subunits: alpha(3), beta(3), gamma(1), delta(1), epsilon(1). F(0) has three main subunits: a(1), b(2) and c(10-14). The alpha and beta chains form an alternating ring which encloses part of the gamma chain. F(1) is attached to F(0) by a central stalk formed by the gamma and epsilon chains, while a peripheral stalk is formed by the delta and b chains.

Its subcellular location is the cell membrane. F(1)F(0) ATP synthase produces ATP from ADP in the presence of a proton or sodium gradient. F-type ATPases consist of two structural domains, F(1) containing the extramembraneous catalytic core and F(0) containing the membrane proton channel, linked together by a central stalk and a peripheral stalk. During catalysis, ATP synthesis in the catalytic domain of F(1) is coupled via a rotary mechanism of the central stalk subunits to proton translocation. Its function is as follows. Component of the F(0) channel, it forms part of the peripheral stalk, linking F(1) to F(0). In Leifsonia xyli subsp. xyli (strain CTCB07), this protein is ATP synthase subunit b.